Reading from the N-terminus, the 118-residue chain is Large ribosomal subunit protein bL19 (118 aa).

Belongs to the bacterial ribosomal protein bL19 family.

Its function is as follows. This protein is located at the 30S-50S ribosomal subunit interface and may play a role in the structure and function of the aminoacyl-tRNA binding site. The chain is Large ribosomal subunit protein bL19 from Geobacter sulfurreducens (strain ATCC 51573 / DSM 12127 / PCA).